We begin with the raw amino-acid sequence, 406 residues long: 3-oxoacyl-[acyl-carrier-protein] synthase 1 (406 aa).

The Ketosynthase family 3 (KS3) domain maps to 1-403 (MKRAVITGLG…GTNATLVMRK (403 aa)). Catalysis depends on for beta-ketoacyl synthase activity residues C163, H298, and H333.

This sequence belongs to the thiolase-like superfamily. Beta-ketoacyl-ACP synthases family. In terms of assembly, homodimer.

The protein resides in the cytoplasm. The enzyme catalyses a fatty acyl-[ACP] + malonyl-[ACP] + H(+) = a 3-oxoacyl-[ACP] + holo-[ACP] + CO2. It carries out the reaction (3Z)-decenoyl-[ACP] + malonyl-[ACP] + H(+) = 3-oxo-(5Z)-dodecenoyl-[ACP] + holo-[ACP] + CO2. It functions in the pathway lipid metabolism; fatty acid biosynthesis. Its function is as follows. Involved in the type II fatty acid elongation cycle. Catalyzes the elongation of a wide range of acyl-ACP by the addition of two carbons from malonyl-ACP to an acyl acceptor. Can also use unsaturated fatty acids. Catalyzes a key reaction in unsaturated fatty acid (UFA) synthesis, the elongation of the cis-3-decenoyl-ACP produced by FabA. The protein is 3-oxoacyl-[acyl-carrier-protein] synthase 1 (fabB) of Escherichia coli O6:H1 (strain CFT073 / ATCC 700928 / UPEC).